Consider the following 119-residue polypeptide: NADH dehydrogenase [ubiquinone] 1 subunit C2 (119 aa).

A helical transmembrane segment spans residues 56–75 (GLHRQLLYITAFFFAGYYLV).

It belongs to the complex I NDUFC2 subunit family. As to quaternary structure, complex I is composed of 45 different subunits. Interacts with TMEM242.

Its subcellular location is the mitochondrion inner membrane. Functionally, accessory subunit of the mitochondrial membrane respiratory chain NADH dehydrogenase (Complex I), that is believed not to be involved in catalysis but required for the complex assembly. Complex I functions in the transfer of electrons from NADH to the respiratory chain. The immediate electron acceptor for the enzyme is believed to be ubiquinone. The sequence is that of NADH dehydrogenase [ubiquinone] 1 subunit C2 from Pan troglodytes (Chimpanzee).